Consider the following 482-residue polypeptide: tRNA sulfurtransferase (482 aa).

One can recognise a THUMP domain in the interval 61–165; the sequence is SAIRDALTRI…QDRLLLIKGR (105 aa). Residues 183-184, lysine 265, glycine 287, and glutamine 296 contribute to the ATP site; that span reads LI. Cysteine 344 and cysteine 456 form a disulfide bridge. A Rhodanese domain is found at 404–482; that stretch reads FAPTDVLLDI…GFSNVKVYRP (79 aa). Residue cysteine 456 is the Cysteine persulfide intermediate of the active site.

It belongs to the ThiI family.

It is found in the cytoplasm. The enzyme catalyses [ThiI sulfur-carrier protein]-S-sulfanyl-L-cysteine + a uridine in tRNA + 2 reduced [2Fe-2S]-[ferredoxin] + ATP + H(+) = [ThiI sulfur-carrier protein]-L-cysteine + a 4-thiouridine in tRNA + 2 oxidized [2Fe-2S]-[ferredoxin] + AMP + diphosphate. It catalyses the reaction [ThiS sulfur-carrier protein]-C-terminal Gly-Gly-AMP + S-sulfanyl-L-cysteinyl-[cysteine desulfurase] + AH2 = [ThiS sulfur-carrier protein]-C-terminal-Gly-aminoethanethioate + L-cysteinyl-[cysteine desulfurase] + A + AMP + 2 H(+). The protein operates within cofactor biosynthesis; thiamine diphosphate biosynthesis. Its function is as follows. Catalyzes the ATP-dependent transfer of a sulfur to tRNA to produce 4-thiouridine in position 8 of tRNAs, which functions as a near-UV photosensor. Also catalyzes the transfer of sulfur to the sulfur carrier protein ThiS, forming ThiS-thiocarboxylate. This is a step in the synthesis of thiazole, in the thiamine biosynthesis pathway. The sulfur is donated as persulfide by IscS. The sequence is that of tRNA sulfurtransferase from Pectobacterium carotovorum subsp. carotovorum (strain PC1).